The following is a 58-amino-acid chain: MKTIFVVILVLFVLSAMLASSPDTTAEAAGCRGNCVTICRDKGKVGGKCYNGKCFCFN.

An N-terminal signal peptide occupies residues 1–19 (MKTIFVVILVLFVLSAMLA). Disulfide bonds link cysteine 31–cysteine 49, cysteine 35–cysteine 54, and cysteine 39–cysteine 56.

Belongs to the short scorpion toxin superfamily. Potassium channel inhibitor family. Alpha-KTx 26 subfamily. Expressed by the venom gland.

Its subcellular location is the secreted. Its function is as follows. Inhibits voltage-gated potassium channels. In Lychas mucronatus (Chinese swimming scorpion), this protein is Potassium channel toxin alpha-KTx 26.2.